Reading from the N-terminus, the 447-residue chain is Phosphoglucosamine mutase (447 aa).

The Phosphoserine intermediate role is filled by S100. Positions 100, 239, 241, and 243 each coordinate Mg(2+). Residue S100 is modified to Phosphoserine.

The protein belongs to the phosphohexose mutase family. Requires Mg(2+) as cofactor. In terms of processing, activated by phosphorylation.

The catalysed reaction is alpha-D-glucosamine 1-phosphate = D-glucosamine 6-phosphate. In terms of biological role, catalyzes the conversion of glucosamine-6-phosphate to glucosamine-1-phosphate. The protein is Phosphoglucosamine mutase of Thermoanaerobacter pseudethanolicus (strain ATCC 33223 / 39E) (Clostridium thermohydrosulfuricum).